The sequence spans 556 residues: 2-succinyl-5-enolpyruvyl-6-hydroxy-3-cyclohexene-1-carboxylate synthase (556 aa).

This sequence belongs to the TPP enzyme family. MenD subfamily. As to quaternary structure, homodimer. Mg(2+) is required as a cofactor. Requires Mn(2+) as cofactor. The cofactor is thiamine diphosphate.

The enzyme catalyses isochorismate + 2-oxoglutarate + H(+) = 5-enolpyruvoyl-6-hydroxy-2-succinyl-cyclohex-3-ene-1-carboxylate + CO2. The protein operates within quinol/quinone metabolism; 1,4-dihydroxy-2-naphthoate biosynthesis; 1,4-dihydroxy-2-naphthoate from chorismate: step 2/7. It functions in the pathway quinol/quinone metabolism; menaquinone biosynthesis. In terms of biological role, catalyzes the thiamine diphosphate-dependent decarboxylation of 2-oxoglutarate and the subsequent addition of the resulting succinic semialdehyde-thiamine pyrophosphate anion to isochorismate to yield 2-succinyl-5-enolpyruvyl-6-hydroxy-3-cyclohexene-1-carboxylate (SEPHCHC). The protein is 2-succinyl-5-enolpyruvyl-6-hydroxy-3-cyclohexene-1-carboxylate synthase of Escherichia coli O127:H6 (strain E2348/69 / EPEC).